Reading from the N-terminus, the 209-residue chain is Large ribosomal subunit protein bL25 (209 aa).

The interval 190–209 (LKSEEAASEGAAEEEAKDGE) is disordered. The span at 200 to 209 (AAEEEAKDGE) shows a compositional bias: acidic residues.

It belongs to the bacterial ribosomal protein bL25 family. CTC subfamily. As to quaternary structure, part of the 50S ribosomal subunit; part of the 5S rRNA/L5/L18/L25 subcomplex. Contacts the 5S rRNA. Binds to the 5S rRNA independently of L5 and L18.

This is one of the proteins that binds to the 5S RNA in the ribosome where it forms part of the central protuberance. This chain is Large ribosomal subunit protein bL25, found in Brucella anthropi (strain ATCC 49188 / DSM 6882 / CCUG 24695 / JCM 21032 / LMG 3331 / NBRC 15819 / NCTC 12168 / Alc 37) (Ochrobactrum anthropi).